A 352-amino-acid chain; its full sequence is D-arabitol-phosphate dehydrogenase (352 aa).

Mn(2+) is bound by residues Cys43, His65, Cys96, Cys99, Cys102, Cys110, and Glu151.

This sequence belongs to the zinc-containing alcohol dehydrogenase family. As to quaternary structure, homotetramer. Mn(2+) is required as a cofactor.

It carries out the reaction D-arabinitol 1-phosphate + NAD(+) = D-xylulose 5-phosphate + NADH + H(+). Its activity is regulated as follows. Inhibited by EDTA, 4-hydroxymercuribenzoic acid (PHMB), mercury and zinc ions at a concentration of 2 mM. Involved in the arabitol catabolism via the arabitol phosphate route. Catalyzes only the transformation of D-arabitol 1-phosphate (Arb1P) and D-arabitol 5-phosphate (Arb5P) into D-xylulose 5-phosphate (Xlu5P) and ribulose 5-phosphate, respectively. It can use both NAD and NADP. The chain is D-arabitol-phosphate dehydrogenase from Enterococcus avium (Streptococcus avium).